Here is a 373-residue protein sequence, read N- to C-terminus: Protein SENSITIVE TO PROTON RHIZOTOXICITY 2 (373 aa).

2 C2H2-type zinc fingers span residues 217 to 239 (HYCQICGKGFKRDANLRMHMRAH) and 327 to 362 (KHCGDIKWVCSCGTKFSRKDKLMSHVSLFLGHVPAH).

In terms of tissue distribution, expressed at low levels in roots (e.g. root tips and lateral roots), leaves (e.g. at the edge of mature leaves, possibly in hydathodes, and in vascular bundles), flowers (e.g. floral filaments), stems, siliques and cotyledons.

The protein resides in the nucleus. Functionally, probable transcription factor. Together with STOP1, plays a critical role in tolerance to major stress factors in acid soils such as proton H(+) and aluminum ion Al(3+). Required for the expression of genes in response to acidic stress (e.g. ALMT1 and MATE), and Al-activated citrate exudation. This chain is Protein SENSITIVE TO PROTON RHIZOTOXICITY 2, found in Arabidopsis thaliana (Mouse-ear cress).